Consider the following 1112-residue polypeptide: Glutamate receptor-interacting protein 1 (1112 aa).

Ser-43 carries the phosphoserine modification. PDZ domains follow at residues 53-136, 150-238, 252-336, 471-560, 572-657, and 672-754; these read VVEL…EYEL, TVEV…EYDV, LVEV…LPHH, EVVL…EFDV, HVKL…RKDE, and TVEL…KKQT. 3 disordered regions span residues 752-796, 841-886, and 922-963; these read KQTD…VYPS, KRAS…AEQE, and NHEA…DVGR. The span at 869-880 shows a compositional bias: low complexity; it reads STASGFAGASDS. A compositionally biased stretch (polar residues) spans 928-958; that stretch reads ARSQLGRQASFQERSNSRPHYSQTTRSNTLP. Residues 988 to 1070 enclose the PDZ 7 domain; sequence KVTLYKDSGM…KLDLVISRNP (83 aa). Positions 1077–1112 are disordered; sequence IEQPALPSDWSEQNSAFFQQPSHGGNLETREPTNTL. Positions 1086 to 1099 are enriched in polar residues; it reads WSEQNSAFFQQPSH.

In terms of assembly, interacts with EFNB1, EPHA7, EPHB2, EFNB3, KIF5A, KIF5C, KIF5B and the C-terminal tail of PRLHR. Forms a ternary complex with GRIA2 and CSPG4. Can form homomultimers or heteromultimers with GRIP2. Interacts with GRIA2, GRIA3, GRIPAP1/GRASP1, PPFIA1, PPFIA4, FRAS1, PLCD4, PTPRF and liprins-alpha. Interacts with ATAD1 in an ATP-dependent manner. ATAD1-catalyzed ATP hydrolysis disrupts binding to ATAD1 and to GRIA2 and leads to AMPAR complex disassembly. Interacts with SLC30A9. Interacts with BUD23. Forms a complex with NSG1, GRIA2 and STX12; controls the intracellular fate of AMPAR and the endosomal sorting of the GRIA2 subunit toward recycling and membrane targeting. Interacts with NSG1. As to expression, expressed in brain, testis and retina. In brain highly expressed in the olfactory bulb, cortex and hippocampus and lower level in thalamus, cerebellum and spinal cord. In brain it is found in the perikaryon, dendrites, dendritic shafts, dendritic spines and, excitatory and inhibitory synapses of neurons. In retina, it is most abundant in the plexiform layers than in perikarya.

It localises to the cytoplasmic vesicle. It is found in the perikaryon. The protein localises to the cell projection. The protein resides in the dendrite. Its subcellular location is the cytoplasm. It localises to the endomembrane system. It is found in the postsynaptic cell membrane. The protein localises to the postsynaptic density. The protein resides in the endoplasmic reticulum membrane. Its function is as follows. May play a role as a localized scaffold for the assembly of a multiprotein signaling complex and as mediator of the trafficking of its binding partners at specific subcellular location in neurons. Through complex formation with NSG1, GRIA2 and STX12 controls the intracellular fate of AMPAR and the endosomal sorting of the GRIA2 subunit toward recycling and membrane targeting. The sequence is that of Glutamate receptor-interacting protein 1 (Grip1) from Rattus norvegicus (Rat).